Reading from the N-terminus, the 159-residue chain is Phosphopantetheine adenylyltransferase (159 aa).

Position 8 (T8) interacts with substrate. ATP-binding positions include 8 to 9 (TF) and H16. K40, T72, and R86 together coordinate substrate. Residues 87-89 (GLR), E97, and 122-128 (YSFLSSS) contribute to the ATP site.

This sequence belongs to the bacterial CoaD family. Homohexamer. It depends on Mg(2+) as a cofactor.

It is found in the cytoplasm. It catalyses the reaction (R)-4'-phosphopantetheine + ATP + H(+) = 3'-dephospho-CoA + diphosphate. It participates in cofactor biosynthesis; coenzyme A biosynthesis; CoA from (R)-pantothenate: step 4/5. Its function is as follows. Reversibly transfers an adenylyl group from ATP to 4'-phosphopantetheine, yielding dephospho-CoA (dPCoA) and pyrophosphate. This is Phosphopantetheine adenylyltransferase from Prochlorococcus marinus subsp. pastoris (strain CCMP1986 / NIES-2087 / MED4).